The primary structure comprises 325 residues: MSRYSRITGTGSSLPPRRLTNADLVAELAGRGVETSDQWIVERTGIRARHFAERDVCSSDLGLEAARQALDAAGVQPADIDLIIVATSTPDMVFPSTACILQNKLGANGCPAFDVQAVCSGFIYALTVADSMIRSGAARRALVVGSEVFSRLLDFNDRTTCVLFGDGAGAVVLEASETPGILASDLHADGRHVGILCVPGNVYGGQILGDPLLKMDGQAVFKLAVGVLDKAARAVLDKAGLKESDVDWLIPHQANIRIMQGTAKKLGLPMDRVVVTVDQHGNTSAASIPLALDHAVRSGQARPGQNLLLEGVGGGFTWGAVLLTL.

Residues cysteine 119 and histidine 252 contribute to the active site. The ACP-binding stretch occupies residues 253-257 (QANIR). Asparagine 282 is a catalytic residue.

Belongs to the thiolase-like superfamily. FabH family. In terms of assembly, homodimer.

The protein localises to the cytoplasm. It catalyses the reaction malonyl-[ACP] + acetyl-CoA + H(+) = 3-oxobutanoyl-[ACP] + CO2 + CoA. It participates in lipid metabolism; fatty acid biosynthesis. Its function is as follows. Catalyzes the condensation reaction of fatty acid synthesis by the addition to an acyl acceptor of two carbons from malonyl-ACP. Catalyzes the first condensation reaction which initiates fatty acid synthesis and may therefore play a role in governing the total rate of fatty acid production. Possesses both acetoacetyl-ACP synthase and acetyl transacylase activities. Its substrate specificity determines the biosynthesis of branched-chain and/or straight-chain of fatty acids. The protein is Beta-ketoacyl-[acyl-carrier-protein] synthase III of Paracidovorax citrulli (strain AAC00-1) (Acidovorax citrulli).